The primary structure comprises 97 residues: Co-chaperonin GroES (97 aa).

The protein belongs to the GroES chaperonin family. In terms of assembly, heptamer of 7 subunits arranged in a ring. Interacts with the chaperonin GroEL.

Its subcellular location is the cytoplasm. Its function is as follows. Together with the chaperonin GroEL, plays an essential role in assisting protein folding. The GroEL-GroES system forms a nano-cage that allows encapsulation of the non-native substrate proteins and provides a physical environment optimized to promote and accelerate protein folding. GroES binds to the apical surface of the GroEL ring, thereby capping the opening of the GroEL channel. This Bifidobacterium longum (strain NCC 2705) protein is Co-chaperonin GroES.